A 177-amino-acid polypeptide reads, in one-letter code: Large ribosomal subunit protein bL9 (177 aa).

It belongs to the bacterial ribosomal protein bL9 family.

Functionally, binds to the 23S rRNA. This is Large ribosomal subunit protein bL9 from Rhodopirellula baltica (strain DSM 10527 / NCIMB 13988 / SH1).